Consider the following 235-residue polypeptide: MGDSQYSFSLTTFSPSGKLVQIEHALTAVGSGQTSLGIKASNGVVIATEKKLPSILVDEASVQKIQHLTPNIGTVYSGMGPDFRVLVRKSRKQAEQYLRLYKEPIPVTQLVRETATVMQEFTQSGGVRPFGVSLLVAGYDDKGPQLYQVDPSGSYFSWKASAMGKNVSNAKTFLEKRYTEDMELDDAIHTAILTLKEGFEGEISSKNIEIGKIGTDKVFRVLTPAEIDDYLAEVE.

K64 participates in a covalent cross-link: Glycyl lysine isopeptide (Lys-Gly) (interchain with G-Cter in ubiquitin).

This sequence belongs to the peptidase T1A family. Component of the 20S core complex of the 26S proteasome. The 26S proteasome is composed of a core protease (CP), known as the 20S proteasome, capped at one or both ends by the 19S regulatory particle (RP/PA700). The 20S proteasome core is composed of 28 subunits that are arranged in four stacked rings, resulting in a barrel-shaped structure. The two end rings are each formed by seven alpha subunits, and the two central rings are each formed by seven beta subunits. The catalytic chamber with the active sites is on the inside of the barrel.

The protein localises to the cytoplasm. The protein resides in the nucleus. Functionally, the proteasome is a multicatalytic proteinase complex which is characterized by its ability to cleave peptides with Arg, Phe, Tyr, Leu, and Glu adjacent to the leaving group at neutral or slightly basic pH. The proteasome has an ATP-dependent proteolytic activity. The protein is Proteasome subunit alpha type-2-B (PAB2) of Arabidopsis thaliana (Mouse-ear cress).